Consider the following 116-residue polypeptide: Large ribosomal subunit protein uL18 (116 aa).

It belongs to the universal ribosomal protein uL18 family. Part of the 50S ribosomal subunit; part of the 5S rRNA/L5/L18/L25 subcomplex. Contacts the 5S and 23S rRNAs.

This is one of the proteins that bind and probably mediate the attachment of the 5S RNA into the large ribosomal subunit, where it forms part of the central protuberance. In Shewanella putrefaciens (strain CN-32 / ATCC BAA-453), this protein is Large ribosomal subunit protein uL18.